The following is a 664-amino-acid chain: Acid beta-fructofuranosidase 4, vacuolar (664 aa).

Topologically, residues 1–43 (MASSDALLPISAREEEPLCPYTRLPMADPNQETHGPRRRRPFK) are cytoplasmic. Positions 1–108 (MASSDALLPI…WKLSGDRNTP (108 aa)) are cleaved as a propeptide — removed in mature form. 2 consecutive short sequence motifs (critical for endoplasmic reticulum export) follow at residues 7 to 8 (LL) and 9 to 10 (PI). Residues 14–16 (EEE) carry the Critical for trafficking from the trans-Golgi network to the prevacuolar compartment and from the prevacuolar compartment to the central vacuole motif. A helical; Signal-anchor for type II membrane protein membrane pass occupies residues 44–64 (GLLAVSFGLLFIAFYVALIAT). Residues 65-664 (HDGSRSNDEG…DEAVRALSRT (600 aa)) are Lumenal-facing. Residue N113 is glycosylated (N-linked (GlcNAc...) asparagine). Substrate contacts are provided by residues 132–135 (WMND), Q151, W159, 194–195 (WT), and 258–259 (RD). Residue D135 is part of the active site. N-linked (GlcNAc...) (complex) asparagine glycosylation is present at N280. The substrate site is built by E313 and D346. Residues N362 and N498 are each glycosylated (N-linked (GlcNAc...) asparagine). The cysteines at positions 510 and 558 are disulfide-linked.

This sequence belongs to the glycosyl hydrolase 32 family. As to quaternary structure, may be present in two forms, a 70 kDa monomer and a heterodimer of the 30 kDa and 38 kDa subunits. The ratio of the levels of the two forms within cells appears to be regulated developmentally. In terms of tissue distribution, mostly expressed in stems, roots and flowers, and, to a lower extent, in mature leaves.

The protein resides in the vacuole. The protein localises to the endoplasmic reticulum membrane. Its subcellular location is the golgi apparatus membrane. It localises to the golgi apparatus. It is found in the trans-Golgi network membrane. The protein resides in the prevacuolar compartment membrane. The protein localises to the vacuole membrane. Its subcellular location is the vacuole lumen. The enzyme catalyses Hydrolysis of terminal non-reducing beta-D-fructofuranoside residues in beta-D-fructofuranosides.. It functions in the pathway glycan biosynthesis; sucrose metabolism. With respect to regulation, inhibited by C/VIF1 and C/VIF2. Functionally, possible role in the continued mobilization of sucrose to sink organs. Regulates root elongation. This chain is Acid beta-fructofuranosidase 4, vacuolar, found in Arabidopsis thaliana (Mouse-ear cress).